A 187-amino-acid chain; its full sequence is Peptide deformylase (187 aa).

Fe cation is bound by residues C107 and H149. E150 is a catalytic residue. A Fe cation-binding site is contributed by H153.

Belongs to the polypeptide deformylase family. Requires Fe(2+) as cofactor.

It carries out the reaction N-terminal N-formyl-L-methionyl-[peptide] + H2O = N-terminal L-methionyl-[peptide] + formate. Its function is as follows. Removes the formyl group from the N-terminal Met of newly synthesized proteins. Requires at least a dipeptide for an efficient rate of reaction. N-terminal L-methionine is a prerequisite for activity but the enzyme has broad specificity at other positions. The protein is Peptide deformylase of Picosynechococcus sp. (strain ATCC 27264 / PCC 7002 / PR-6) (Agmenellum quadruplicatum).